The sequence spans 100 residues: Large ribosomal subunit protein uL23 (100 aa).

This sequence belongs to the universal ribosomal protein uL23 family. Part of the 50S ribosomal subunit. Contacts protein L29, and trigger factor when it is bound to the ribosome.

One of the early assembly proteins it binds 23S rRNA. One of the proteins that surrounds the polypeptide exit tunnel on the outside of the ribosome. Forms the main docking site for trigger factor binding to the ribosome. This chain is Large ribosomal subunit protein uL23, found in Mycolicibacterium vanbaalenii (strain DSM 7251 / JCM 13017 / BCRC 16820 / KCTC 9966 / NRRL B-24157 / PYR-1) (Mycobacterium vanbaalenii).